The primary structure comprises 173 residues: Small ribosomal subunit protein uS5 (173 aa).

In terms of domain architecture, S5 DRBM spans 17-80 (WQERVIQIRR…ADGKKQLIEV (64 aa)).

The protein belongs to the universal ribosomal protein uS5 family. Part of the 30S ribosomal subunit. Contacts proteins S4 and S8.

Functionally, with S4 and S12 plays an important role in translational accuracy. Its function is as follows. Located at the back of the 30S subunit body where it stabilizes the conformation of the head with respect to the body. The polypeptide is Small ribosomal subunit protein uS5 (Microcystis aeruginosa (strain NIES-843 / IAM M-2473)).